The following is a 105-amino-acid chain: Prokineticin-1 (105 aa).

The signal sequence occupies residues 1-19 (MRGAVHIFIMLLLATASDC). 5 cysteine pairs are disulfide-bonded: Cys26-Cys38, Cys32-Cys50, Cys37-Cys78, Cys60-Cys86, and Cys80-Cys96.

This sequence belongs to the AVIT (prokineticin) family. Highly expressed in liver and ovary and weakly expressed in testis and placenta. Expressed in mucosa and mesenchyme of embryonic gut during enteric nervous system development (at protein level). Predominantly expressed in kidney and liver. Also expressed in lung, ovary, placenta and testis. In fetal liver, is restricted to and highly expressed in hepatocytes. In adult kidney, expression is restricted to the endothelial tubule cells. In placenta, expressed throughout gestation.

It localises to the secreted. Its function is as follows. Potently contracts gastrointestinal (GI) smooth muscle. Induces proliferation, migration and fenestration (the formation of membrane discontinuities) in capillary endothelial cells. Induces proliferation and differentiation, but not migration, of enteric neural crest cells. Directly influences neuroblastoma progression by promoting the proliferation and migration of neuroblastoma cells. Positively regulates PTGS2 expression and prostaglandin synthesis. May play a role in placentation. May play a role in normal and pathological testis angiogenesis. This chain is Prokineticin-1, found in Mus musculus (Mouse).